A 474-amino-acid polypeptide reads, in one-letter code: tRNA-2-methylthio-N(6)-dimethylallyladenosine synthase (474 aa).

The MTTase N-terminal domain occupies Gln-3–Gly-120. [4Fe-4S] cluster is bound by residues Cys-12, Cys-49, Cys-83, Cys-157, Cys-161, and Cys-164. A Radical SAM core domain is found at Arg-143 to Gln-375. Residues Arg-378–Arg-441 form the TRAM domain.

It belongs to the methylthiotransferase family. MiaB subfamily. In terms of assembly, monomer. Requires [4Fe-4S] cluster as cofactor.

Its subcellular location is the cytoplasm. It catalyses the reaction N(6)-dimethylallyladenosine(37) in tRNA + (sulfur carrier)-SH + AH2 + 2 S-adenosyl-L-methionine = 2-methylsulfanyl-N(6)-dimethylallyladenosine(37) in tRNA + (sulfur carrier)-H + 5'-deoxyadenosine + L-methionine + A + S-adenosyl-L-homocysteine + 2 H(+). In terms of biological role, catalyzes the methylthiolation of N6-(dimethylallyl)adenosine (i(6)A), leading to the formation of 2-methylthio-N6-(dimethylallyl)adenosine (ms(2)i(6)A) at position 37 in tRNAs that read codons beginning with uridine. The protein is tRNA-2-methylthio-N(6)-dimethylallyladenosine synthase of Haemophilus influenzae (strain PittGG).